Reading from the N-terminus, the 673-residue chain is Acetoacetyl-CoA synthetase (673 aa).

It belongs to the ATP-dependent AMP-binding enzyme family.

Its subcellular location is the cytoplasm. It is found in the cytosol. It catalyses the reaction acetoacetate + ATP + CoA = acetoacetyl-CoA + AMP + diphosphate. In terms of biological role, converts acetoacetate to acetoacetyl-CoA in the cytosol. Ketone body-utilizing enzyme, responsible for the synthesis of cholesterol and fatty acids. In Danio rerio (Zebrafish), this protein is Acetoacetyl-CoA synthetase (aacs).